Reading from the N-terminus, the 178-residue chain is ATP synthase subunit delta (178 aa).

This sequence belongs to the ATPase delta chain family. F-type ATPases have 2 components, F(1) - the catalytic core - and F(0) - the membrane proton channel. F(1) has five subunits: alpha(3), beta(3), gamma(1), delta(1), epsilon(1). F(0) has three main subunits: a(1), b(2) and c(10-14). The alpha and beta chains form an alternating ring which encloses part of the gamma chain. F(1) is attached to F(0) by a central stalk formed by the gamma and epsilon chains, while a peripheral stalk is formed by the delta and b chains.

It localises to the cell membrane. In terms of biological role, f(1)F(0) ATP synthase produces ATP from ADP in the presence of a proton or sodium gradient. F-type ATPases consist of two structural domains, F(1) containing the extramembraneous catalytic core and F(0) containing the membrane proton channel, linked together by a central stalk and a peripheral stalk. During catalysis, ATP synthesis in the catalytic domain of F(1) is coupled via a rotary mechanism of the central stalk subunits to proton translocation. Functionally, this protein is part of the stalk that links CF(0) to CF(1). It either transmits conformational changes from CF(0) to CF(1) or is implicated in proton conduction. The polypeptide is ATP synthase subunit delta (Streptococcus pyogenes serotype M3 (strain SSI-1)).